A 111-amino-acid polypeptide reads, in one-letter code: UPF0235 protein glr3835 (111 aa).

Belongs to the UPF0235 family.

The polypeptide is UPF0235 protein glr3835 (Gloeobacter violaceus (strain ATCC 29082 / PCC 7421)).